The sequence spans 158 residues: Regulator of sigma D (158 aa).

It belongs to the Rsd/AlgQ family. Interacts with RpoD.

The protein resides in the cytoplasm. Its function is as follows. Binds RpoD and negatively regulates RpoD-mediated transcription activation by preventing the interaction between the primary sigma factor RpoD with the catalytic core of the RNA polymerase and with promoter DNA. May be involved in replacement of the RNA polymerase sigma subunit from RpoD to RpoS during the transition from exponential growth to the stationary phase. The polypeptide is Regulator of sigma D (Shigella dysenteriae serotype 1 (strain Sd197)).